A 195-amino-acid chain; its full sequence is MAREATIARTTNETSIQLSFSLDGEGKAELETGVPFLTHMLDLFAKHGQFDLRVDAKGDTHIDDHHTTEDIGICLGQAIKEALGDKKGIKRYGNAFVPMDDALAQVVIDLSNRPHFEFRGEFPAAKVGTFDVELVYEFLWKLALEARMNLHVIVHYGRNTHHMIEAVFKALGRALDEATMVDPRVKGVPSTKGML.

It belongs to the imidazoleglycerol-phosphate dehydratase family.

The protein resides in the cytoplasm. The enzyme catalyses D-erythro-1-(imidazol-4-yl)glycerol 3-phosphate = 3-(imidazol-4-yl)-2-oxopropyl phosphate + H2O. It functions in the pathway amino-acid biosynthesis; L-histidine biosynthesis; L-histidine from 5-phospho-alpha-D-ribose 1-diphosphate: step 6/9. This chain is Imidazoleglycerol-phosphate dehydratase, found in Geobacillus thermodenitrificans (strain NG80-2).